Here is a 616-residue protein sequence, read N- to C-terminus: Protein translocase subunit SecD (616 aa).

The next 6 helical transmembrane spans lie at 11-31 (LMVIFIVAIGILYSLPNIYGE), 453-473 (QGINASLWGLVAVIAFMLFYY), 475-495 (MFGVIASFALVINIVLLVGLM), 497-517 (ILPGATLSMPGIAGIVLTLGM), 547-569 (YNGAFTSIFDANLTTILTAIILY), and 585-605 (LGVAISMFTAITGTRALVNAL).

The protein belongs to the SecD/SecF family. SecD subfamily. Forms a complex with SecF. Part of the essential Sec protein translocation apparatus which comprises SecA, SecYEG and auxiliary proteins SecDF-YajC and YidC.

The protein resides in the cell inner membrane. Its function is as follows. Part of the Sec protein translocase complex. Interacts with the SecYEG preprotein conducting channel. SecDF uses the proton motive force (PMF) to complete protein translocation after the ATP-dependent function of SecA. In Haemophilus influenzae (strain ATCC 51907 / DSM 11121 / KW20 / Rd), this protein is Protein translocase subunit SecD.